The primary structure comprises 467 residues: Methylenetetrahydrofolate--tRNA-(uracil-5-)-methyltransferase TrmFO (467 aa).

11–16 (GAGLAG) serves as a coordination point for FAD.

This sequence belongs to the MnmG family. TrmFO subfamily. FAD serves as cofactor.

It localises to the cytoplasm. The enzyme catalyses uridine(54) in tRNA + (6R)-5,10-methylene-5,6,7,8-tetrahydrofolate + NADH + H(+) = 5-methyluridine(54) in tRNA + (6S)-5,6,7,8-tetrahydrofolate + NAD(+). The catalysed reaction is uridine(54) in tRNA + (6R)-5,10-methylene-5,6,7,8-tetrahydrofolate + NADPH + H(+) = 5-methyluridine(54) in tRNA + (6S)-5,6,7,8-tetrahydrofolate + NADP(+). In terms of biological role, catalyzes the folate-dependent formation of 5-methyl-uridine at position 54 (M-5-U54) in all tRNAs. In Prochlorococcus marinus (strain NATL2A), this protein is Methylenetetrahydrofolate--tRNA-(uracil-5-)-methyltransferase TrmFO.